A 165-amino-acid chain; its full sequence is P2Y purinoceptor 4 (165 aa).

A helical membrane pass occupies residues 1–16; sequence SDTLYVLSLPTLVYYY. Residues 17–30 are Extracellular-facing; it reads AARNHWPFGTGFCK. Residues 31–51 traverse the membrane as a helical segment; that stretch reads FVRFLFYWNLYCSVLFLTCIS. Residues 52–74 are Cytoplasmic-facing; the sequence is VHRYMGICHPLRALRWGRPRFAS. The helical transmembrane segment at 75–95 threads the bilayer; it reads LLCLAVWLVVAGCLVPNLFFV. At 96–124 the chain is on the extracellular side; that stretch reads TTSPNGTTILCHDTTRPEEFDHYVHFSSA. Asparagine 100 carries N-linked (GlcNAc...) asparagine glycosylation. Residues 125 to 145 form a helical membrane-spanning segment; that stretch reads VMVLLFGLPFLVTLVCYGLMA. The Cytoplasmic segment spans residues 146–165; the sequence is RRLYRPLPGAGQSSSRLRSL.

Belongs to the G-protein coupled receptor 1 family.

The protein resides in the cell membrane. Receptor for UTP and UDP coupled to G-proteins that activate a phosphatidylinositol-calcium second messenger system. This chain is P2Y purinoceptor 4 (P2RY4), found in Cricetulus griseus (Chinese hamster).